Consider the following 259-residue polypeptide: Oxidase ustYb (259 aa).

The helical transmembrane segment at 36–56 threads the bilayer; the sequence is IIYTSLAFVGFIEILFFGIFF. Residues Asn-102 and Asn-122 are each glycosylated (N-linked (GlcNAc...) asparagine). 2 consecutive short sequence motifs (HXXHC) follow at residues 147 to 151 and 197 to 201; these read HQLHC and HVDHC.

It belongs to the ustYa family.

The protein localises to the membrane. It functions in the pathway mycotoxin biosynthesis. Oxidase; part of the gene cluster that mediates the biosynthesis of the secondary metabolite ustiloxin B, an antimitotic tetrapeptide. First, ustA is processed by the subtilisin-like endoprotease Kex2 that is outside the ustiloxin B gene cluster, at the C-terminal side of Arg-Lys, after transfer to Golgi apparatus through the endoplasmic reticulum (ER). Cleavage by KEX2 generates 16 peptides YAIG-I to YAIG-XVI. To process the precursor peptide further, at least two peptidases are necessary to cleave the N-terminal and C-terminal sides of the Tyr-Ala-Ile-Gly core peptide which serves as backbone for the synthesis of ustiloxin B, through cyclization and modification of the tyrosine with a non-protein coding amino acid, norvaline. One of the two peptidases must be the serine peptidase ustP; and the other pepdidase is probably ustH. Macrocyclization of the core peptide derived from ustA requires the tyrosinase ustQ, as well as the homologous oxidases ustYa and ustYb, and leads to the production of the first cyclization product N-desmethylustiloxin F. For the formation of N-desmethylustiloxin F, three oxidation steps are required, hydroxylation at the benzylic position, hydroxylation at either the aromatic ring of Tyr or beta-position of Ile, and oxidative cyclization. UstQ may catalyze the oxidation of a phenol moiety, whereas the ustYa and ustYb are most likely responsible for the remaining two-step oxidations. N-desmethylustiloxin F is then methylated by ustM to yield ustiloxin F which in turn substrate of the cytochrome P450 monooxygenase ustC which catalyzes the formation of S-deoxyustiloxin H. The flavoprotein monooxygenases ustF1 and ustF2 then participate in the modification of the side chain of S-deoxyustiloxin H, leading to the synthesis of an oxime intermediate, via ustiloxin H. Finally, carboxylative dehydration performed by the cysteine desulfurase-like protein ustD yields ustiloxin B. The protein is Oxidase ustYb of Aspergillus flavus (strain ATCC 200026 / FGSC A1120 / IAM 13836 / NRRL 3357 / JCM 12722 / SRRC 167).